A 2876-amino-acid polypeptide reads, in one-letter code: Nipped-B-like protein B (2876 aa).

2 stretches are compositionally biased toward polar residues: residues 124-142 (PQNS…TTIT) and 149-167 (YVQT…QNSP). 4 disordered regions span residues 124–197 (PQNS…PIQQ), 246–367 (NDEG…SDAE), 439–494 (RESA…AGNK), and 525–1017 (EGPV…FPNY). The span at 276–290 (GPRPPLILQSPPPYT) shows a compositional bias: pro residues. Residues 439-457 (RESAIERERCSKEVQDKDK) show a composition bias toward basic and acidic residues. Low complexity predominate over residues 471–480 (PGAAGTAGAS). Positions 481–490 (GTPGVGGGCN) are enriched in gly residues. 3 stretches are compositionally biased toward basic and acidic residues: residues 556-577 (SKTD…KQRV), 586-955 (VDGR…EQRS), and 962-1005 (VKQE…HKPQ). The PxVxL motif signature appears at 1068–1081 (NKGAKPVVVLKKLS). Disordered regions lie at residues 1088–1229 (MISN…EPKL) and 1724–1747 (TEKA…KDVE). Positions 1090-1100 (SNSRSSKSSRS) are enriched in low complexity. Basic and acidic residues-rich tracts occupy residues 1104 to 1119 (RFRE…ERVK) and 1156 to 1183 (KDRD…DSRR). The segment covering 1212 to 1223 (KLKKKEKQKKRK) has biased composition (basic residues). HEAT repeat units follow at residues 1803–1841 (AQSF…VDPS), 1879–1917 (PQLT…EQPT), 1981–2020 (YDWF…HILK), 2203–2241 (VVIK…QDPG), and 2349–2387 (LIHP…KYTG). 2 disordered regions span residues 2516-2590 (EVVK…DSDL) and 2728-2774 (ALLG…GHRN). Over residues 2519–2537 (KKKKKKKKKKKQKQKRGKK) the composition is skewed to basic residues. Low complexity predominate over residues 2548-2563 (RSSSSSSSSSSSSSDS). The span at 2762–2774 (RTGDSAEASGHRN) shows a compositional bias: basic and acidic residues.

Belongs to the SCC2/Nipped-B family.

The protein resides in the nucleus. In terms of biological role, may play a structural role in chromatin. Involved in sister chromatid cohesion, possibly by facilitating the cohesin complex loading. Transcription factor, which may promote cortical neuron migration during brain development by regulating the transcription of crucial genes in this process. The sequence is that of Nipped-B-like protein B (nipblb) from Danio rerio (Zebrafish).